The chain runs to 126 residues: RutC family protein PH0854 (126 aa).

Belongs to the RutC family.

This Pyrococcus horikoshii (strain ATCC 700860 / DSM 12428 / JCM 9974 / NBRC 100139 / OT-3) protein is RutC family protein PH0854.